A 211-amino-acid polypeptide reads, in one-letter code: Pyridoxine/pyridoxamine 5'-phosphate oxidase (211 aa).

Substrate-binding positions include 7–10 (RREY) and Lys-65. FMN contacts are provided by residues 60–65 (RIVLLK), 75–76 (YT), Arg-81, Lys-82, and Gln-104. Tyr-122, Arg-126, and Ser-130 together coordinate substrate. FMN is bound by residues 139-140 (QS) and Trp-184. 190-192 (RLH) lines the substrate pocket. Arg-194 lines the FMN pocket.

Belongs to the pyridoxamine 5'-phosphate oxidase family. Homodimer. The cofactor is FMN.

The catalysed reaction is pyridoxamine 5'-phosphate + O2 + H2O = pyridoxal 5'-phosphate + H2O2 + NH4(+). It catalyses the reaction pyridoxine 5'-phosphate + O2 = pyridoxal 5'-phosphate + H2O2. It participates in cofactor metabolism; pyridoxal 5'-phosphate salvage; pyridoxal 5'-phosphate from pyridoxamine 5'-phosphate: step 1/1. It functions in the pathway cofactor metabolism; pyridoxal 5'-phosphate salvage; pyridoxal 5'-phosphate from pyridoxine 5'-phosphate: step 1/1. Functionally, catalyzes the oxidation of either pyridoxine 5'-phosphate (PNP) or pyridoxamine 5'-phosphate (PMP) into pyridoxal 5'-phosphate (PLP). The sequence is that of Pyridoxine/pyridoxamine 5'-phosphate oxidase from Vibrio atlanticus (strain LGP32) (Vibrio splendidus (strain Mel32)).